Here is a 136-residue protein sequence, read N- to C-terminus: Phospholipase A2 (136 aa).

Residues Trp-8, Gly-10, and Gly-12 each contribute to the Ca(2+) site. 5 cysteine pairs are disulfide-bonded: Cys-9–Cys-31, Cys-30–Cys-70, Cys-37–Cys-63, Cys-61–Cys-95, and Cys-105–Cys-115. Asn-16 carries an N-linked (GlcNAc...) asparagine glycan. The active site involves His-34. Asp-35 contributes to the Ca(2+) binding site. The active site involves Asp-64.

It belongs to the phospholipase A2 family. Ca(2+) is required as a cofactor. Expressed by the venom gland.

It is found in the secreted. The catalysed reaction is a 1,2-diacyl-sn-glycero-3-phosphocholine + H2O = a 1-acyl-sn-glycero-3-phosphocholine + a fatty acid + H(+). Its function is as follows. PLA2 catalyzes the calcium-dependent hydrolysis of the 2-acyl groups in 3-sn-phosphoglycerides. The sequence is that of Phospholipase A2 from Bombus pensylvanicus (American bumblebee).